The sequence spans 350 residues: MLPFRSNIAAMAGYVPGYQPPDVASWIKLNTNENPYPPSPEVVKAILAELGGDGALLRTYPSASSQVLRETVGELFGFDPAWIIMANGSDEVLNNLIRAFAGEGEEIGYVHPSYSYYATLAEIQGARVRTFGLTDDLRIAGFPGRYEGKLFFLTTPNSPLGFAFPLAYIEELATRCAGVLVVDEAYADFADGDALDLVRRHENVVVTRTLSKSYSLAGMRLGFAVARPAVIAALDKIRDHYNLDRLAQAACVASLRDQTYFAGCTRLIRETREWFSAEIRTLGYEVIPSQGNFVFAAPPDRDGKRVYDGLYSRKILVRHFSDPLLAHGMRISIGTREEMEATLAALKEIG.

Lysine 212 carries the post-translational modification N6-(pyridoxal phosphate)lysine.

Belongs to the class-II pyridoxal-phosphate-dependent aminotransferase family. Histidinol-phosphate aminotransferase subfamily. As to quaternary structure, homodimer. It depends on pyridoxal 5'-phosphate as a cofactor.

It catalyses the reaction L-histidinol phosphate + 2-oxoglutarate = 3-(imidazol-4-yl)-2-oxopropyl phosphate + L-glutamate. It functions in the pathway amino-acid biosynthesis; L-histidine biosynthesis; L-histidine from 5-phospho-alpha-D-ribose 1-diphosphate: step 7/9. This chain is Histidinol-phosphate aminotransferase, found in Geobacter sulfurreducens (strain ATCC 51573 / DSM 12127 / PCA).